The sequence spans 235 residues: Ribonuclease HII (235 aa).

The region spanning 23–212 (GLVAGVDEAG…VAHVVSIARM (190 aa)) is the RNase H type-2 domain. A divalent metal cation-binding residues include Asp29, Glu30, and Asp121.

The protein belongs to the RNase HII family. Mn(2+) serves as cofactor. It depends on Mg(2+) as a cofactor.

The protein resides in the cytoplasm. It catalyses the reaction Endonucleolytic cleavage to 5'-phosphomonoester.. Endonuclease that specifically degrades the RNA of RNA-DNA hybrids. The chain is Ribonuclease HII from Delftia acidovorans (strain DSM 14801 / SPH-1).